Reading from the N-terminus, the 156-residue chain is Small ribosomal subunit protein uS7 (156 aa).

Belongs to the universal ribosomal protein uS7 family. In terms of assembly, part of the 30S ribosomal subunit. Contacts proteins S9 and S11.

Functionally, one of the primary rRNA binding proteins, it binds directly to 16S rRNA where it nucleates assembly of the head domain of the 30S subunit. Is located at the subunit interface close to the decoding center, probably blocks exit of the E-site tRNA. In Desulfosudis oleivorans (strain DSM 6200 / JCM 39069 / Hxd3) (Desulfococcus oleovorans), this protein is Small ribosomal subunit protein uS7.